We begin with the raw amino-acid sequence, 350 residues long: Putative transport protein YdbI (350 aa).

8 helical membrane passes run 18–38, 67–87, 145–165, 207–227, 229–249, 257–277, 289–309, and 311–331; these read IFVVLTGVLYLFKSMINLILL, VVITFLYMLLAVLLTVGGFVF, ISTFGLQVVMALILSMFFLFE, FIIALVNCILTFIALWIMHFP, LFGLSIMVFFLGLIPVAGVVI, IAYSTGGGMYVLYIVLVIFAI, LMSAKTELPIFFTFTVLIFSE, and FFGIWGLIIGIPIFVFLLDIL.

It belongs to the autoinducer-2 exporter (AI-2E) (TC 2.A.86) family.

It localises to the cell membrane. This Bacillus subtilis (strain 168) protein is Putative transport protein YdbI (ydbI).